Reading from the N-terminus, the 484-residue chain is Legumin type B (484 aa).

Positions 1-22 (MSKPFLSLLSLSLLLFTSTCLA) are cleaved as a signal peptide. 2 disulfides stabilise this stretch: Cys33-Cys66 and Cys109-Cys310. A Cupin type-1 1 domain is found at 38–257 (INALEPDHRV…TFNTEEDTAK (220 aa)). Disordered regions lie at residues 109–141 (CPQT…RFRK), 196–236 (PETQ…GNSV), and 275–304 (GLRI…GRNG). The segment covering 117–129 (RSSQSRQGSRQQQ) has biased composition (low complexity). Acidic residues predominate over residues 284–293 (QQEEEEEEEE). Residues 316–463 (ENIAQPARAD…AFGLRQRQVT (148 aa)) form the Cupin type-1 2 domain.

This sequence belongs to the 11S seed storage protein (globulins) family. As to quaternary structure, hexamer; each subunit is composed of an acidic and a basic chain derived from a single precursor and linked by a disulfide bond.

Functionally, this protein found in the seeds of many leguminous and non-leguminous plants is the source of sulfur-containing amino acids in seed meals. The sequence is that of Legumin type B (LEB4) from Vicia faba (Broad bean).